The chain runs to 325 residues: Beta-lactamase 1 (325 aa).

Residues 1–26 form the signal peptide; the sequence is MRIRPTRRLLLGAVAPLALVPLVACG. The segment at 30 to 50 is disordered; sequence GSESGQQPGLGGCGTSAHGSA. Residue Ser93 is the Acyl-ester intermediate of the active site. Substrate is bound at residue 270–272; that stretch reads KSG.

The protein belongs to the class-A beta-lactamase family.

The catalysed reaction is a beta-lactam + H2O = a substituted beta-amino acid. This is Beta-lactamase 1 (blaL) from Streptomyces cacaoi.